A 1470-amino-acid polypeptide reads, in one-letter code: Histone acetyltransferase HAC4 (1470 aa).

Residues 1 to 10 show a composition bias toward polar residues; it reads MNNNKEVPQN. Disordered stretches follow at residues 1–20 and 342–376; these read MNNN…SSSA and TNFQ…HSQN. A compositionally biased stretch (low complexity) spans 11 to 20; sequence SVAVSSSSSA. Over residues 342–365 the composition is skewed to polar residues; the sequence is TNFQSAPNNRDNLPQVSQQLSNHG. Residues 416-495 form a TAZ-type 1 zinc finger; that stretch reads GQTSSNTVLR…SISCRTCVAV (80 aa). The interval 518-566 is disordered; it reads SSKCQPKKSSKSRQAYKKGGAEAPSVDADLQRSIKRPKLHRPSQNITPE. Residues 522-533 are compositionally biased toward basic residues; it reads QPKKSSKSRQAY. The PHD-type zinc finger occupies 764–841; it reads HYVCAPCYNE…KYTCPSCYIQ (78 aa). The 438-residue stretch at 856-1293 folds into the CBP/p300-type HAT domain; sequence VPGATSLPVT…ILYHLHNPTA (438 aa). Acetyl-CoA is bound by residues 979–981, 998–999, and W1054; these read LDS and RT. 2 consecutive ZZ-type zinc fingers follow at residues 1175–1238 and 1295–1347; these read HLQH…IKDV and AFAT…SSTD. 16 residues coordinate Zn(2+): C1180, C1183, C1195, C1198, C1204, C1207, H1220, H1228, C1300, C1303, C1315, C1318, C1324, C1327, H1335, and H1337. A TAZ-type 2 zinc finger spans residues 1358 to 1436; it reads SQSYQVKLEK…KCTVPKCSGL (79 aa).

Rosette leaves, stems and flowers.

It is found in the nucleus. It catalyses the reaction L-lysyl-[protein] + acetyl-CoA = N(6)-acetyl-L-lysyl-[protein] + CoA + H(+). In terms of biological role, acetyltransferase enzyme. Acetylates histones, giving a specific tag for transcriptional activation. The protein is Histone acetyltransferase HAC4 (HAC4) of Arabidopsis thaliana (Mouse-ear cress).